The following is a 453-amino-acid chain: Magnesium transporter MgtE (453 aa).

Topologically, residues 1-286 (MNEGQEMEEQ…ENPLKAASKR (286 aa)) are cytoplasmic. The Mg(2+) site is built by Glu-71, Asp-98, Asp-102, Glu-136, Ala-140, Tyr-176, Arg-227, Asp-230, Ala-233, Asp-251, and Glu-259. CBS domains lie at 142-205 (MTTE…IADI) and 206-262 (LNER…EAAS). A helical transmembrane segment spans residues 287-307 (LPWLITLLFLGMSTASLISNY). A topological domain (extracellular) is located at residue Glu-308. The helical transmembrane segment at 309–329 (SLVSEASILAVFISLITGTAG) threads the bilayer. The Cytoplasmic portion of the chain corresponds to 330–360 (NAGTQSLAVAVRRLAMKDEKDSNFGRLILSE). Residues 361-381 (VLTGLVTGAVTGLTIMIVVGV) traverse the membrane as a helical segment. Residues 382–389 (WQHNLPLG) lie on the Extracellular side of the membrane. Residues 390-410 (FVIGMAMLCAITVANLAGSLI) form a helical membrane-spanning segment. Over 411–427 (PMLMDKLGFDPAVASGP) the chain is Cytoplasmic. A helical transmembrane segment spans residues 428–448 (FITTLSDLTSVLIYFNIASMF). Asp-434 provides a ligand contact to Mg(2+). The Extracellular segment spans residues 449–453 (MRYFV).

Belongs to the SLC41A transporter family. As to quaternary structure, homodimer.

It is found in the cell membrane. The catalysed reaction is Mg(2+)(in) = Mg(2+)(out). Its function is as follows. Acts as a magnesium transporter. The chain is Magnesium transporter MgtE from Enterococcus faecalis (strain ATCC 700802 / V583).